The following is a 473-amino-acid chain: Glutamate--tRNA ligase 1 (473 aa).

The short motif at 23–33 (PSPTGLLHVGG) is the 'HIGH' region element. Positions 252 to 256 (KLSKR) match the 'KMSKS' region motif. ATP is bound at residue Lys255.

This sequence belongs to the class-I aminoacyl-tRNA synthetase family. Glutamate--tRNA ligase type 1 subfamily. Monomer.

It localises to the cytoplasm. The enzyme catalyses tRNA(Glu) + L-glutamate + ATP = L-glutamyl-tRNA(Glu) + AMP + diphosphate. Its function is as follows. Catalyzes the attachment of glutamate to tRNA(Glu) in a two-step reaction: glutamate is first activated by ATP to form Glu-AMP and then transferred to the acceptor end of tRNA(Glu). This Granulibacter bethesdensis (strain ATCC BAA-1260 / CGDNIH1) protein is Glutamate--tRNA ligase 1.